The primary structure comprises 504 residues: uncharacterized protein (504 aa).

The interval 36-60 (TAFRMEKEQRLPSQNKPPRGRRRPD) is disordered. An Integrase catalytic domain is found at 125–309 (QTHEPGRLGL…RPHLQVLPER (185 aa)).

This is an uncharacterized protein from Sinorhizobium fredii (strain NBRC 101917 / NGR234).